We begin with the raw amino-acid sequence, 189 residues long: UPF0688 protein C1orf174 homolog (189 aa).

The interval 53 to 137 (QMAGDGGEAK…TTDPSVFFDE (85 aa)) is disordered. Basic and acidic residues-rich tracts occupy residues 59–73 (GEAK…HGEV) and 93–103 (APGERRGKENS).

Belongs to the UPF0688 family.

It is found in the nucleus. The protein is UPF0688 protein C1orf174 homolog of Danio rerio (Zebrafish).